The chain runs to 367 residues: Glutamate 5-kinase (367 aa).

Lys-17 serves as a coordination point for ATP. Positions 57, 144, and 156 each coordinate substrate. ATP is bound by residues 176–177 (SD) and 217–223 (TGGMVSK). The 79-residue stretch at 279–357 (VGSLTLDEGA…SELPCELRRP (79 aa)) folds into the PUA domain.

The protein belongs to the glutamate 5-kinase family.

Its subcellular location is the cytoplasm. The enzyme catalyses L-glutamate + ATP = L-glutamyl 5-phosphate + ADP. Its pathway is amino-acid biosynthesis; L-proline biosynthesis; L-glutamate 5-semialdehyde from L-glutamate: step 1/2. Functionally, catalyzes the transfer of a phosphate group to glutamate to form L-glutamate 5-phosphate. This chain is Glutamate 5-kinase, found in Mycobacterium leprae (strain Br4923).